We begin with the raw amino-acid sequence, 244 residues long: U11/U12 small nuclear ribonucleoprotein 35 kDa protein (244 aa).

The 79-residue stretch at 51–129 (LTLFVARLNL…HEIFVDYELE (79 aa)) folds into the RRM domain. Residues 146–162 (GKKESGQLRFGGRDRPF) are compositionally biased toward basic and acidic residues. Residues 146 to 244 (GKKESGQLRF…KSRDKRDRSK (99 aa)) are disordered. Residue lysine 172 forms a Glycyl lysine isopeptide (Lys-Gly) (interchain with G-Cter in SUMO2) linkage. 2 stretches are compositionally biased toward basic and acidic residues: residues 173–185 (NEPH…ERRE) and 192–244 (RHWD…DRSK).

Component of the U11/U12 snRNPs that are part of the U12-type spliceosome.

The protein resides in the nucleus. This chain is U11/U12 small nuclear ribonucleoprotein 35 kDa protein (Snrnp35), found in Mus musculus (Mouse).